Here is a 117-residue protein sequence, read N- to C-terminus: Large ribosomal subunit protein bL20 (117 aa).

It belongs to the bacterial ribosomal protein bL20 family.

Functionally, binds directly to 23S ribosomal RNA and is necessary for the in vitro assembly process of the 50S ribosomal subunit. It is not involved in the protein synthesizing functions of that subunit. The sequence is that of Large ribosomal subunit protein bL20 from Vibrio cholerae serotype O1 (strain ATCC 39541 / Classical Ogawa 395 / O395).